We begin with the raw amino-acid sequence, 513 residues long: Histidine ammonia-lyase (513 aa).

The 5-imidazolinone (Ala-Gly) cross-link spans 144-146; that stretch reads ASG. Position 145 is a 2,3-didehydroalanine (Ser) (S145).

The protein belongs to the PAL/histidase family. Post-translationally, contains an active site 4-methylidene-imidazol-5-one (MIO), which is formed autocatalytically by cyclization and dehydration of residues Ala-Ser-Gly.

It localises to the cytoplasm. The enzyme catalyses L-histidine = trans-urocanate + NH4(+). It participates in amino-acid degradation; L-histidine degradation into L-glutamate; N-formimidoyl-L-glutamate from L-histidine: step 1/3. This is Histidine ammonia-lyase from Streptococcus sanguinis (strain SK36).